The chain runs to 187 residues: Adenine phosphoribosyltransferase (187 aa).

The protein belongs to the purine/pyrimidine phosphoribosyltransferase family. In terms of assembly, homodimer.

Its subcellular location is the cytoplasm. It carries out the reaction AMP + diphosphate = 5-phospho-alpha-D-ribose 1-diphosphate + adenine. The protein operates within purine metabolism; AMP biosynthesis via salvage pathway; AMP from adenine: step 1/1. Functionally, catalyzes a salvage reaction resulting in the formation of AMP, that is energically less costly than de novo synthesis. The chain is Adenine phosphoribosyltransferase from Yersinia enterocolitica serotype O:8 / biotype 1B (strain NCTC 13174 / 8081).